The following is a 1103-amino-acid chain: Coatomer subunit beta (1103 aa).

HEAT repeat units follow at residues 51–89, 94–129, 130–166, 247–284, 322–359, 365–404, and 405–441; these read EAYTRLLMTVIRYAMPSKDKRVKKLTQLYLEIVGKCRPD, EEMILICNALRNDLMSPNEYVRGSTLRLLSKIRQFK, VLEPLVEAILQNLTHRHSYVRRNAVMCVYSIVKNFGL, QQKAGLLRLIVSILPNTLPSVAYEGACSLLALSRAPVS, RTMEEFVIDLLRGLQTPSLEVRRKILDLVLQIVGKNSV, VLKRELLRTAEPEQLTVPRTMEYRRLLIKAVHSCCTRFPE, and AAASVVNVLIDFPGDPDVTTATEVAVVVRELVATCVH.

In terms of assembly, oligomeric complex that consists of at least the alpha, beta, beta', gamma, delta, epsilon and zeta subunits.

It is found in the cytoplasm. The protein localises to the golgi apparatus membrane. The protein resides in the cytoplasmic vesicle. Its subcellular location is the COPI-coated vesicle membrane. In terms of biological role, the coatomer is a cytosolic protein complex that binds to dilysine motifs and reversibly associates with Golgi non-clathrin-coated vesicles, which further mediate biosynthetic protein transport from the ER, via the Golgi up to the trans Golgi network. Coatomer complex is required for budding from Golgi membranes, and is essential for the retrograde Golgi-to-ER transport of dilysine-tagged proteins. This chain is Coatomer subunit beta, found in Toxoplasma gondii.